The primary structure comprises 467 residues: Probable protein phosphatase 2C 55 (467 aa).

Residues 222 to 458 (SCYLPHPDKE…DDITVVVSYV (237 aa)) enclose the PPM-type phosphatase domain. Asp252, Gly253, Asp383, and Asp449 together coordinate Mn(2+).

This sequence belongs to the PP2C family. It depends on Mg(2+) as a cofactor. Requires Mn(2+) as cofactor.

The enzyme catalyses O-phospho-L-seryl-[protein] + H2O = L-seryl-[protein] + phosphate. The catalysed reaction is O-phospho-L-threonyl-[protein] + H2O = L-threonyl-[protein] + phosphate. The sequence is that of Probable protein phosphatase 2C 55 from Arabidopsis thaliana (Mouse-ear cress).